The sequence spans 503 residues: Glycerol kinase (503 aa).

T12 contacts ADP. Residues T12, T13, and S14 each coordinate ATP. T12 contacts sn-glycerol 3-phosphate. Residue R16 coordinates ADP. Sn-glycerol 3-phosphate contacts are provided by R82, E83, Y134, and D243. The glycerol site is built by R82, E83, Y134, D243, and Q244. ADP-binding residues include T265 and G308. Residues T265, G308, Q312, and G412 each contribute to the ATP site. G412 serves as a coordination point for ADP.

The protein belongs to the FGGY kinase family.

The catalysed reaction is glycerol + ATP = sn-glycerol 3-phosphate + ADP + H(+). It functions in the pathway polyol metabolism; glycerol degradation via glycerol kinase pathway; sn-glycerol 3-phosphate from glycerol: step 1/1. With respect to regulation, inhibited by fructose 1,6-bisphosphate (FBP). Key enzyme in the regulation of glycerol uptake and metabolism. Catalyzes the phosphorylation of glycerol to yield sn-glycerol 3-phosphate. The chain is Glycerol kinase from Nitrobacter hamburgensis (strain DSM 10229 / NCIMB 13809 / X14).